The primary structure comprises 371 residues: UDP-N-acetylglucosamine--N-acetylmuramyl-(pentapeptide) pyrophosphoryl-undecaprenol N-acetylglucosamine transferase (371 aa).

Residues 15 to 17 (TGG), N126, R172, S199, I256, 275 to 280 (ALTVSE), and Q301 each bind UDP-N-acetyl-alpha-D-glucosamine.

The protein belongs to the glycosyltransferase 28 family. MurG subfamily.

The protein resides in the cell inner membrane. The enzyme catalyses di-trans,octa-cis-undecaprenyl diphospho-N-acetyl-alpha-D-muramoyl-L-alanyl-D-glutamyl-meso-2,6-diaminopimeloyl-D-alanyl-D-alanine + UDP-N-acetyl-alpha-D-glucosamine = di-trans,octa-cis-undecaprenyl diphospho-[N-acetyl-alpha-D-glucosaminyl-(1-&gt;4)]-N-acetyl-alpha-D-muramoyl-L-alanyl-D-glutamyl-meso-2,6-diaminopimeloyl-D-alanyl-D-alanine + UDP + H(+). It functions in the pathway cell wall biogenesis; peptidoglycan biosynthesis. In terms of biological role, cell wall formation. Catalyzes the transfer of a GlcNAc subunit on undecaprenyl-pyrophosphoryl-MurNAc-pentapeptide (lipid intermediate I) to form undecaprenyl-pyrophosphoryl-MurNAc-(pentapeptide)GlcNAc (lipid intermediate II). The protein is UDP-N-acetylglucosamine--N-acetylmuramyl-(pentapeptide) pyrophosphoryl-undecaprenol N-acetylglucosamine transferase of Francisella tularensis subsp. tularensis (strain FSC 198).